Reading from the N-terminus, the 512-residue chain is Glucose-6-phosphate 1-dehydrogenase (512 aa).

Residues Arg-61, 103 to 104, and Lys-171 contribute to the NADP(+) site; that span reads EF. Residues His-201, Lys-205, Glu-239, and Asp-258 each contribute to the substrate site. The Proton acceptor role is filled by His-263. Residues Lys-360 and Lys-365 each coordinate substrate. The segment at 479–512 is disordered; that stretch reads QDSSPSFPNYPAGSSGPKEADALIERDGRSWRPL. The span at 496–512 shows a compositional bias: basic and acidic residues; the sequence is KEADALIERDGRSWRPL.

This sequence belongs to the glucose-6-phosphate dehydrogenase family.

It carries out the reaction D-glucose 6-phosphate + NADP(+) = 6-phospho-D-glucono-1,5-lactone + NADPH + H(+). Its pathway is carbohydrate degradation; pentose phosphate pathway; D-ribulose 5-phosphate from D-glucose 6-phosphate (oxidative stage): step 1/3. Its function is as follows. Catalyzes the oxidation of glucose 6-phosphate to 6-phosphogluconolactone. The polypeptide is Glucose-6-phosphate 1-dehydrogenase (Chlamydia pneumoniae (Chlamydophila pneumoniae)).